A 216-amino-acid chain; its full sequence is MAGRGGAARPNGPAAGNKICQFKLVLLGESAVGKSSLVLRFVKGQFHEYQESTIGAAFLTQTVCLDDTTVKFEIWDTAGQERYHSLAPMYYRGAQAAIVVYDITNTDTFARAKNWVKELQRQASPNIVIALAGNKADLASKRAVEFQEAQAYADDNSLLFMETSAKTAMNVNEIFMAIAKKLPKNEPQNAAGAPGRTRGVDLQESNPASRSQCCSN.

Serine 30, alanine 31, glycine 33, lysine 34, serine 35, serine 36, histidine 47, glutamate 48, threonine 53, and glycine 79 together coordinate GTP. Serine 35 contacts Mg(2+). Short sequence motifs (switch) lie at residues 45-57 (QFHEYQESTIGAA) and 78-94 (AGQERYHSLAPMYYRGA). Threonine 53 serves as a coordination point for Mg(2+). Serine 85 is modified (phosphoserine). Residues asparagine 134, lysine 135, aspartate 137, alanine 165, and lysine 166 each coordinate GTP. Residues 185 to 216 (NEPQNAAGAPGRTRGVDLQESNPASRSQCCSN) form a disordered region. Positions 203-216 (QESNPASRSQCCSN) are enriched in polar residues. Residues cysteine 213 and cysteine 214 are each lipidated (S-geranylgeranyl cysteine).

It belongs to the small GTPase superfamily. Rab family. Interacts with EEA1 and INCA1. Interacts with GDI1, GDI2, CHML and CHM; phosphorylation at Ser-85 disrupts this interaction. Mg(2+) serves as cofactor. In terms of processing, phosphorylation of Ser-85 in the switch II region by LRRK2 prevents the association of RAB regulatory proteins, including CHM, CHML and RAB GDP dissociation inhibitors GDI1 and GDI2.

It localises to the cell membrane. Its subcellular location is the early endosome membrane. The protein resides in the melanosome. The enzyme catalyses GTP + H2O = GDP + phosphate + H(+). Its activity is regulated as follows. Regulated by guanine nucleotide exchange factors (GEFs) which promote the exchange of bound GDP for free GTP. Regulated by GTPase activating proteins (GAPs) which increase the GTP hydrolysis activity. Inhibited by GDP dissociation inhibitors (GDIs). Functionally, the small GTPases Rab are key regulators of intracellular membrane trafficking, from the formation of transport vesicles to their fusion with membranes. Rabs cycle between an inactive GDP-bound form and an active GTP-bound form that is able to recruit to membranes different sets of downstream effectors directly responsible for vesicle formation, movement, tethering and fusion. This is Ras-related protein Rab-5C from Mus musculus (Mouse).